Reading from the N-terminus, the 56-residue chain is MPERIVKPMPQDPVTKPGDEGPRTPNVPKPDTERLLERMRRVDPRQAQRYRQRSGE.

The disordered stretch occupies residues 1–56; the sequence is MPERIVKPMPQDPVTKPGDEGPRTPNVPKPDTERLLERMRRVDPRQAQRYRQRSGE. Basic and acidic residues predominate over residues 30 to 46; that stretch reads PDTERLLERMRRVDPRQ. Glutamate 56 is covalently cross-linked (Isoglutamyl lysine isopeptide (Glu-Lys) (interchain with K-? in acceptor proteins)).

Belongs to the ubiquitin-like protein UBact family.

May function as a protein modifier covalently attached to lysine residues of substrate proteins. This may serve to target the modified proteins for degradation by proteasomes. This chain is Prokaryotic ubiquitin-like protein UBact, found in Acetithermum autotrophicum.